A 28-amino-acid chain; its full sequence is Putative GDSL-motif lipase/hydrolase-like protein (28 aa).

The protein belongs to the 'GDSL' lipolytic enzyme family.

The chain is Putative GDSL-motif lipase/hydrolase-like protein from Populus euphratica (Euphrates poplar).